The following is a 159-amino-acid chain: MKITVVCVGKIKEKYLTMAIEEYSKRLSRYCKLEIIELADEKTPDNASPAEELQIKKKEGERILKNIKDNAYVIALAIEGKMLSSEELADKMQLLGVNGESHLAFVIGGSLGLDSEVLDRADFKLSFSKMTFPHQVMRTILLEQVYRGFRIMSGEPYHK.

S-adenosyl-L-methionine-binding positions include L76, G108, and 127-132 (FSKMTF).

It belongs to the RNA methyltransferase RlmH family. In terms of assembly, homodimer.

The protein resides in the cytoplasm. The catalysed reaction is pseudouridine(1915) in 23S rRNA + S-adenosyl-L-methionine = N(3)-methylpseudouridine(1915) in 23S rRNA + S-adenosyl-L-homocysteine + H(+). Functionally, specifically methylates the pseudouridine at position 1915 (m3Psi1915) in 23S rRNA. The chain is Ribosomal RNA large subunit methyltransferase H from Lachnoclostridium phytofermentans (strain ATCC 700394 / DSM 18823 / ISDg) (Clostridium phytofermentans).